A 592-amino-acid polypeptide reads, in one-letter code: Aspartate--tRNA(Asp/Asn) ligase (592 aa).

E173 contributes to the L-aspartate binding site. Residues 197–200 (QLFK) are aspartate. R219 provides a ligand contact to L-aspartate. ATP-binding positions include 219 to 221 (RDE) and Q228. H451 serves as a coordination point for L-aspartate. E486 serves as a coordination point for ATP. Residue R493 participates in L-aspartate binding. 538-541 (GLDR) lines the ATP pocket.

It belongs to the class-II aminoacyl-tRNA synthetase family. Type 1 subfamily. Homodimer.

It is found in the cytoplasm. It carries out the reaction tRNA(Asx) + L-aspartate + ATP = L-aspartyl-tRNA(Asx) + AMP + diphosphate. In terms of biological role, aspartyl-tRNA synthetase with relaxed tRNA specificity since it is able to aspartylate not only its cognate tRNA(Asp) but also tRNA(Asn). Reaction proceeds in two steps: L-aspartate is first activated by ATP to form Asp-AMP and then transferred to the acceptor end of tRNA(Asp/Asn). The chain is Aspartate--tRNA(Asp/Asn) ligase from Alkalilimnicola ehrlichii (strain ATCC BAA-1101 / DSM 17681 / MLHE-1).